Here is a 381-residue protein sequence, read N- to C-terminus: Sulfite reductase, dissimilatory-type subunit beta (381 aa).

[4Fe-4S] cluster is bound by residues cysteine 151, cysteine 188, cysteine 189, cysteine 193, cysteine 231, cysteine 258, cysteine 261, and cysteine 264. Cysteine 193 is a binding site for siroheme. The 28-residue stretch at asparagine 249 to glycine 276 folds into the 4Fe-4S ferredoxin-type domain.

In terms of assembly, heterohexamer of two alpha, two beta and two gamma subunits. [4Fe-4S] cluster serves as cofactor. Requires siroheme as cofactor.

The catalysed reaction is [DsrC protein]-trisulfide + NAD(+) + 3 H2O = [DsrC protein]-dithiol + sulfite + NADH + 3 H(+). Catalyzes the reduction of sulfite to sulfide. This is the terminal oxidation reaction in sulfate respiration, a process catalyzed by the sulfate-reducing bacteria. The chain is Sulfite reductase, dissimilatory-type subunit beta (dsvB) from Nitratidesulfovibrio vulgaris (strain ATCC 29579 / DSM 644 / CCUG 34227 / NCIMB 8303 / VKM B-1760 / Hildenborough) (Desulfovibrio vulgaris).